Here is a 228-residue protein sequence, read N- to C-terminus: Ion-translocating oxidoreductase complex subunit E (228 aa).

5 helical membrane-spanning segments follow: residues 18–38, 69–89, 92–112, 125–145, and 182–202; these read ALVQLLGMCPLLAVTSTATNA, IPIYVMIIAAVVSIVQMLINA, FGLYQSLGIFIPLIVTNCIVV, LLSALDGFAIGLGATGAMFVL, and PFLLAMLPPGAFIGLGMMLAV.

It belongs to the NqrDE/RnfAE family. The complex is composed of six subunits: RnfA, RnfB, RnfC, RnfD, RnfE and RnfG.

Its subcellular location is the cell inner membrane. Part of a membrane-bound complex that couples electron transfer with translocation of ions across the membrane. The sequence is that of Ion-translocating oxidoreductase complex subunit E from Cronobacter sakazakii (strain ATCC BAA-894) (Enterobacter sakazakii).